Consider the following 386-residue polypeptide: Succinate--CoA ligase [ADP-forming] subunit beta (386 aa).

The ATP-grasp domain occupies 9-244 (KELFANYGVP…LDEEEPLEVE (236 aa)). ATP-binding positions include K46, 53–55 (GRG), E99, L102, and E107. Residues N199 and D213 each coordinate Mg(2+). Substrate contacts are provided by residues N264 and 321 to 323 (GIL).

The protein belongs to the succinate/malate CoA ligase beta subunit family. In terms of assembly, heterotetramer of two alpha and two beta subunits. It depends on Mg(2+) as a cofactor.

The enzyme catalyses succinate + ATP + CoA = succinyl-CoA + ADP + phosphate. It catalyses the reaction GTP + succinate + CoA = succinyl-CoA + GDP + phosphate. Its pathway is carbohydrate metabolism; tricarboxylic acid cycle; succinate from succinyl-CoA (ligase route): step 1/1. Succinyl-CoA synthetase functions in the citric acid cycle (TCA), coupling the hydrolysis of succinyl-CoA to the synthesis of either ATP or GTP and thus represents the only step of substrate-level phosphorylation in the TCA. The beta subunit provides nucleotide specificity of the enzyme and binds the substrate succinate, while the binding sites for coenzyme A and phosphate are found in the alpha subunit. This chain is Succinate--CoA ligase [ADP-forming] subunit beta, found in Desulfatibacillum aliphaticivorans.